The chain runs to 207 residues: 2,3-bisphosphoglycerate-dependent phosphoglycerate mutase (207 aa).

Residues 10–17 (RHGQSEWN), 23–24 (TG), Arg62, 89–92 (ERDY), Lys100, 116–117 (RR), and 160–161 (GN) each bind substrate. His11 serves as the catalytic Tele-phosphohistidine intermediate. Glu89 serves as the catalytic Proton donor/acceptor.

This sequence belongs to the phosphoglycerate mutase family. BPG-dependent PGAM subfamily. Homodimer.

The catalysed reaction is (2R)-2-phosphoglycerate = (2R)-3-phosphoglycerate. It participates in carbohydrate degradation; glycolysis; pyruvate from D-glyceraldehyde 3-phosphate: step 3/5. Its function is as follows. Catalyzes the interconversion of 2-phosphoglycerate and 3-phosphoglycerate. This is 2,3-bisphosphoglycerate-dependent phosphoglycerate mutase from Bradyrhizobium sp. (strain ORS 278).